Here is a 430-residue protein sequence, read N- to C-terminus: Lipoyl synthase, mitochondrial (430 aa).

A mitochondrion-targeting transit peptide spans 1-37 (MAASTGKLRTLFSAHSSLSARPSSALPALRLTILRSY). The span at 40-56 (TTPPDSSISNPSNPSTT) shows a compositional bias: low complexity. The tract at residues 40–64 (TTPPDSSISNPSNPSTTVKRPPTAF) is disordered. 7 residues coordinate [4Fe-4S] cluster: C141, C146, C152, C172, C176, C179, and S387. The Radical SAM core domain occupies 155–376 (GSSKSAATAT…KERALEMGFL (222 aa)).

It belongs to the radical SAM superfamily. Lipoyl synthase family. It depends on [4Fe-4S] cluster as a cofactor.

The protein resides in the mitochondrion. It carries out the reaction [[Fe-S] cluster scaffold protein carrying a second [4Fe-4S](2+) cluster] + N(6)-octanoyl-L-lysyl-[protein] + 2 oxidized [2Fe-2S]-[ferredoxin] + 2 S-adenosyl-L-methionine + 4 H(+) = [[Fe-S] cluster scaffold protein] + N(6)-[(R)-dihydrolipoyl]-L-lysyl-[protein] + 4 Fe(3+) + 2 hydrogen sulfide + 2 5'-deoxyadenosine + 2 L-methionine + 2 reduced [2Fe-2S]-[ferredoxin]. It participates in protein modification; protein lipoylation via endogenous pathway; protein N(6)-(lipoyl)lysine from octanoyl-[acyl-carrier-protein]: step 2/2. Catalyzes the radical-mediated insertion of two sulfur atoms into the C-6 and C-8 positions of the octanoyl moiety bound to the lipoyl domains of lipoate-dependent enzymes, thereby converting the octanoylated domains into lipoylated derivatives. In Blastomyces gilchristii (strain SLH14081) (Blastomyces dermatitidis), this protein is Lipoyl synthase, mitochondrial.